The sequence spans 297 residues: Ubiquinol oxidase 2, mitochondrial (297 aa).

The interval 17 to 43 (VALNDKQHDKKVENGGAAASGGGDGGD) is disordered. The chain crosses the membrane as a helical span at residues 122–142 (AMMLETVAAVPGMVGGMLLHC). Positions 126, 165, and 168 each coordinate Fe cation. Residues 184 to 204 (ALVFAVQGVFINAYFVTYLLS) form a helical membrane-spanning segment. The Fe cation site is built by Glu216, Glu267, and His270.

This sequence belongs to the alternative oxidase family. Homodimer; disulfide-linked. Requires Fe cation as cofactor.

The protein resides in the mitochondrion inner membrane. The catalysed reaction is 2 a ubiquinol + O2 = 2 a ubiquinone + 2 H2O. Catalyzes the cyanide-resistant oxidation of ubiquinol and the reduction of molecular oxygen to water, but does not translocate protons and consequently is not linked to oxidative phosphorylation. May increase respiration when the cytochrome respiratory pathway is restricted, or in response to low temperatures. In Nicotiana tabacum (Common tobacco), this protein is Ubiquinol oxidase 2, mitochondrial (AOX2).